A 114-amino-acid chain; its full sequence is Tyrosine-protein phosphatase 27 (114 aa).

A Tyrosine-protein phosphatase domain is found at 1–114; the sequence is WQMIVEHKCC…ELGNDNPIVV (114 aa). Asp-82 contacts substrate.

Belongs to the protein-tyrosine phosphatase family.

The catalysed reaction is O-phospho-L-tyrosyl-[protein] + H2O = L-tyrosyl-[protein] + phosphate. The protein is Tyrosine-protein phosphatase 27 (STY-27) of Styela plicata (Wrinkled sea squirt).